The following is a 642-amino-acid chain: ATP-dependent rRNA helicase spb4 (642 aa).

The Q motif motif lies at 14 to 42 (WDGVTPALSEWVLDAVASMGFTRMTPVQA). In terms of domain architecture, Helicase ATP-binding spans 45-250 (IPLFMAHKDV…RVGLRNPVKV (206 aa)). Residue 58–65 (AVTGSGKT) coordinates ATP. The DEAD box signature appears at 198-201 (DEAD). Positions 284-438 (AIKHILYSLE…TLTITDADAA (155 aa)) constitute a Helicase C-terminal domain. A coiled-coil region spans residues 522-625 (AYKDKQREKR…RLLRRAAKDK (104 aa)). 2 stretches are compositionally biased toward basic and acidic residues: residues 527-536 (QREKRRKEQV) and 577-628 (AKQA…KESK). The interval 527-642 (QREKRRKEQV…DDDDEFKGFD (116 aa)) is disordered. The segment covering 632-642 (GDDDDEFKGFD) has biased composition (acidic residues).

The protein belongs to the DEAD box helicase family. DDX55/SPB4 subfamily. In terms of assembly, component of pre-60S ribosomal complexes.

It is found in the nucleus. The protein resides in the nucleolus. The catalysed reaction is ATP + H2O = ADP + phosphate + H(+). Functionally, ATP-binding RNA helicase involved in the biogenesis of 60S ribosomal subunits. Binds 90S pre-ribosomal particles and dissociates from pre-60S ribosomal particles after processing of 27SB pre-rRNA. Required for the normal formation of 18S rRNA through the processing of pre-rRNAs at sites A0, A1 and A2, and the normal formation of 25S and 5.8S rRNAs through the processing of pre-rRNAs at sites C1 and C2. This is ATP-dependent rRNA helicase spb4 from Aspergillus niger (strain ATCC MYA-4892 / CBS 513.88 / FGSC A1513).